Reading from the N-terminus, the 181-residue chain is Oligoribonuclease (181 aa).

The Exonuclease domain occupies 8–171 (LIWIDLEMTG…DDIRESVAEL (164 aa)). Y129 is a catalytic residue.

This sequence belongs to the oligoribonuclease family.

Its subcellular location is the cytoplasm. Its function is as follows. 3'-to-5' exoribonuclease specific for small oligoribonucleotides. The chain is Oligoribonuclease from Yersinia pseudotuberculosis serotype O:1b (strain IP 31758).